A 553-amino-acid polypeptide reads, in one-letter code: Arginine--tRNA ligase (553 aa).

Residues A130–G140 carry the 'HIGH' region motif.

It belongs to the class-I aminoacyl-tRNA synthetase family. As to quaternary structure, monomer.

Its subcellular location is the cytoplasm. It catalyses the reaction tRNA(Arg) + L-arginine + ATP = L-arginyl-tRNA(Arg) + AMP + diphosphate. This chain is Arginine--tRNA ligase, found in Corynebacterium aurimucosum (strain ATCC 700975 / DSM 44827 / CIP 107346 / CN-1) (Corynebacterium nigricans).